Here is a 1060-residue protein sequence, read N- to C-terminus: Carbamoyl phosphate synthase large chain (1060 aa).

The segment at 1-400 (MPRDESINKV…SLNKAIRSLD (400 aa)) is carboxyphosphate synthetic domain. ATP-binding residues include Arg-127, Arg-167, Gly-173, Gly-174, Gln-206, Val-208, Glu-213, Gly-240, Ile-241, His-242, Gln-283, and Glu-297. The ATP-grasp 1 domain maps to 131–326 (DSFMKKLNEP…IAKIAAKIAV (196 aa)). Mg(2+) contacts are provided by Gln-283, Glu-297, and Asn-299. Gln-283, Glu-297, and Asn-299 together coordinate Mn(2+). The interval 401–539 (IGADGFTETP…YGCYDLEDEV (139 aa)) is oligomerization domain. The tract at residues 540-926 (EVSDRRKVLI…YKSQLSASMD (387 aa)) is carbamoyl phosphate synthetic domain. The ATP-grasp 2 domain occupies 664–858 (TEVLNKLGIP…LAKMAARLMM (195 aa)). Residues Arg-700, Lys-739, Leu-741, Glu-746, Gly-771, Val-772, His-773, Ser-774, Gln-814, and Glu-829 each contribute to the ATP site. Residues Gln-814, Glu-829, and Asn-831 each contribute to the Mg(2+) site. Residues Gln-814, Glu-829, and Asn-831 each coordinate Mn(2+). The region spanning 925-1060 (MDLLNEGKVF…VKSLDEYHGM (136 aa)) is the MGS-like domain. The allosteric domain stretch occupies residues 927-1060 (LLNEGKVFIS…VKSLDEYHGM (134 aa)).

Belongs to the CarB family. As to quaternary structure, composed of two chains; the small (or glutamine) chain promotes the hydrolysis of glutamine to ammonia, which is used by the large (or ammonia) chain to synthesize carbamoyl phosphate. Tetramer of heterodimers (alpha,beta)4. Requires Mg(2+) as cofactor. Mn(2+) is required as a cofactor.

The catalysed reaction is hydrogencarbonate + L-glutamine + 2 ATP + H2O = carbamoyl phosphate + L-glutamate + 2 ADP + phosphate + 2 H(+). The enzyme catalyses hydrogencarbonate + NH4(+) + 2 ATP = carbamoyl phosphate + 2 ADP + phosphate + 2 H(+). It participates in amino-acid biosynthesis; L-arginine biosynthesis; carbamoyl phosphate from bicarbonate: step 1/1. Its pathway is pyrimidine metabolism; UMP biosynthesis via de novo pathway; (S)-dihydroorotate from bicarbonate: step 1/3. In terms of biological role, large subunit of the glutamine-dependent carbamoyl phosphate synthetase (CPSase). CPSase catalyzes the formation of carbamoyl phosphate from the ammonia moiety of glutamine, carbonate, and phosphate donated by ATP, constituting the first step of 2 biosynthetic pathways, one leading to arginine and/or urea and the other to pyrimidine nucleotides. The large subunit (synthetase) binds the substrates ammonia (free or transferred from glutamine from the small subunit), hydrogencarbonate and ATP and carries out an ATP-coupled ligase reaction, activating hydrogencarbonate by forming carboxy phosphate which reacts with ammonia to form carbamoyl phosphate. This is Carbamoyl phosphate synthase large chain from Methanothermobacter thermautotrophicus (strain ATCC 29096 / DSM 1053 / JCM 10044 / NBRC 100330 / Delta H) (Methanobacterium thermoautotrophicum).